The primary structure comprises 398 residues: Enoyl-[acyl-carrier-protein] reductase [NADH] (398 aa).

NAD(+) is bound by residues 48–53, 74–75, 111–112, and 139–140; these read GSSTGY, FE, DA, and LA. Tyr-225 serves as a coordination point for substrate. The active-site Proton donor is Tyr-235. Residues Lys-244 and 273–275 contribute to the NAD(+) site; that span reads VVT.

The protein belongs to the TER reductase family. As to quaternary structure, monomer.

The enzyme catalyses a 2,3-saturated acyl-[ACP] + NAD(+) = a (2E)-enoyl-[ACP] + NADH + H(+). It functions in the pathway lipid metabolism; fatty acid biosynthesis. Its function is as follows. Involved in the final reduction of the elongation cycle of fatty acid synthesis (FAS II). Catalyzes the reduction of a carbon-carbon double bond in an enoyl moiety that is covalently linked to an acyl carrier protein (ACP). The chain is Enoyl-[acyl-carrier-protein] reductase [NADH] from Pseudomonas paraeruginosa (strain DSM 24068 / PA7) (Pseudomonas aeruginosa (strain PA7)).